We begin with the raw amino-acid sequence, 270 residues long: Mediator of RNA polymerase II transcription subunit 4 (270 aa).

The disordered stretch occupies residues 1–25 (MAAASSGEKEKERPGGGLGAAGGNS). N-acetylalanine is present on Ala-2. 2 coiled-coil regions span residues 24–48 (NSTR…IEML) and 90–131 (HHEM…AKEK). At Ser-32 the chain carries Phosphoserine. Residues 231–270 (MLPPNHSHDFLLEPPGHNKENEDDVEVMSTDSSSSSSDSD) form a disordered region. Positions 236-250 (HSHDFLLEPPGHNKE) are enriched in basic and acidic residues. Residues 259–270 (STDSSSSSSDSD) are compositionally biased toward low complexity.

The protein belongs to the Mediator complex subunit 4 family. As to quaternary structure, component of the Mediator complex, which is composed of MED1, MED4, MED6, MED7, MED8, MED9, MED10, MED11, MED12, MED13, MED13L, MED14, MED15, MED16, MED17, MED18, MED19, MED20, MED21, MED22, MED23, MED24, MED25, MED26, MED27, MED29, MED30, MED31, CCNC, CDK8 and CDC2L6/CDK11. The MED12, MED13, CCNC and CDK8 subunits form a distinct module termed the CDK8 module. Mediator containing the CDK8 module is less active than Mediator lacking this module in supporting transcriptional activation. Individual preparations of the Mediator complex lacking one or more distinct subunits have been variously termed ARC, CRSP, DRIP, PC2, SMCC and TRAP.

Its subcellular location is the nucleus. Its function is as follows. Component of the Mediator complex, a coactivator involved in the regulated transcription of nearly all RNA polymerase II-dependent genes. Mediator functions as a bridge to convey information from gene-specific regulatory proteins to the basal RNA polymerase II transcription machinery. Mediator is recruited to promoters by direct interactions with regulatory proteins and serves as a scaffold for the assembly of a functional preinitiation complex with RNA polymerase II and the general transcription factors. This chain is Mediator of RNA polymerase II transcription subunit 4 (MED4), found in Bos taurus (Bovine).